A 347-amino-acid chain; its full sequence is Isopentenyl-diphosphate delta-isomerase (347 aa).

9 to 10 contributes to the substrate binding site; sequence RK. Residues Ser67, 68–70, Ser98, and Asn127 contribute to the FMN site; that span reads SMT. 98–100 contacts substrate; it reads SQR. Gln162 contributes to the substrate binding site. Glu163 lines the Mg(2+) pocket. Residues Lys194, Thr224, 274-276, and 295-296 each bind FMN; these read GIR and AA.

Belongs to the IPP isomerase type 2 family. In terms of assembly, homooctamer. Dimer of tetramers. The cofactor is FMN. Requires NADPH as cofactor. Mg(2+) is required as a cofactor.

Its subcellular location is the cytoplasm. It carries out the reaction isopentenyl diphosphate = dimethylallyl diphosphate. Functionally, involved in the biosynthesis of isoprenoids. Catalyzes the 1,3-allylic rearrangement of the homoallylic substrate isopentenyl (IPP) to its allylic isomer, dimethylallyl diphosphate (DMAPP). The sequence is that of Isopentenyl-diphosphate delta-isomerase from Cronobacter sakazakii (strain ATCC BAA-894) (Enterobacter sakazakii).